The primary structure comprises 207 residues: Octanoyltransferase (207 aa).

The BPL/LPL catalytic domain maps to Ala-27–Ala-203. Residues Arg-66–His-73, Ser-133–Gly-135, and Gly-146–Ala-148 each bind substrate. The active-site Acyl-thioester intermediate is Cys-164.

Belongs to the LipB family.

Its subcellular location is the cytoplasm. It carries out the reaction octanoyl-[ACP] + L-lysyl-[protein] = N(6)-octanoyl-L-lysyl-[protein] + holo-[ACP] + H(+). It participates in protein modification; protein lipoylation via endogenous pathway; protein N(6)-(lipoyl)lysine from octanoyl-[acyl-carrier-protein]: step 1/2. In terms of biological role, catalyzes the transfer of endogenously produced octanoic acid from octanoyl-acyl-carrier-protein onto the lipoyl domains of lipoate-dependent enzymes. Lipoyl-ACP can also act as a substrate although octanoyl-ACP is likely to be the physiological substrate. In Neisseria meningitidis serogroup C / serotype 2a (strain ATCC 700532 / DSM 15464 / FAM18), this protein is Octanoyltransferase.